The following is a 260-amino-acid chain: Thiazole synthase (260 aa).

Residue Lys-102 is the Schiff-base intermediate with DXP of the active site. 1-deoxy-D-xylulose 5-phosphate contacts are provided by residues Gly-163, Ala-189–Gly-190, and Asn-211–Thr-212.

The protein belongs to the ThiG family. Homotetramer. Forms heterodimers with either ThiH or ThiS.

It is found in the cytoplasm. It catalyses the reaction [ThiS sulfur-carrier protein]-C-terminal-Gly-aminoethanethioate + 2-iminoacetate + 1-deoxy-D-xylulose 5-phosphate = [ThiS sulfur-carrier protein]-C-terminal Gly-Gly + 2-[(2R,5Z)-2-carboxy-4-methylthiazol-5(2H)-ylidene]ethyl phosphate + 2 H2O + H(+). It functions in the pathway cofactor biosynthesis; thiamine diphosphate biosynthesis. Its function is as follows. Catalyzes the rearrangement of 1-deoxy-D-xylulose 5-phosphate (DXP) to produce the thiazole phosphate moiety of thiamine. Sulfur is provided by the thiocarboxylate moiety of the carrier protein ThiS. In vitro, sulfur can be provided by H(2)S. This chain is Thiazole synthase, found in Citrifermentans bemidjiense (strain ATCC BAA-1014 / DSM 16622 / JCM 12645 / Bem) (Geobacter bemidjiensis).